The chain runs to 541 residues: 2-succinyl-5-enolpyruvyl-6-hydroxy-3-cyclohexene-1-carboxylate synthase (541 aa).

It belongs to the TPP enzyme family. MenD subfamily. Homodimer. Requires Mg(2+) as cofactor. Mn(2+) is required as a cofactor. The cofactor is thiamine diphosphate.

The catalysed reaction is isochorismate + 2-oxoglutarate + H(+) = 5-enolpyruvoyl-6-hydroxy-2-succinyl-cyclohex-3-ene-1-carboxylate + CO2. The protein operates within quinol/quinone metabolism; 1,4-dihydroxy-2-naphthoate biosynthesis; 1,4-dihydroxy-2-naphthoate from chorismate: step 2/7. It participates in quinol/quinone metabolism; menaquinone biosynthesis. In terms of biological role, catalyzes the thiamine diphosphate-dependent decarboxylation of 2-oxoglutarate and the subsequent addition of the resulting succinic semialdehyde-thiamine pyrophosphate anion to isochorismate to yield 2-succinyl-5-enolpyruvyl-6-hydroxy-3-cyclohexene-1-carboxylate (SEPHCHC). The protein is 2-succinyl-5-enolpyruvyl-6-hydroxy-3-cyclohexene-1-carboxylate synthase of Rhodococcus jostii (strain RHA1).